Here is a 604-residue protein sequence, read N- to C-terminus: Replication protein A 70 kDa DNA-binding subunit B (604 aa).

The segment at residues 170–256 is a DNA-binding region (OB); sequence WTIKVRVTNK…QNDYEMTLNE (87 aa). Residues 468–488 form a C4-type zinc finger; the sequence is CKTCNKKVTEAMDSGYWCESC.

The protein belongs to the replication factor A protein 1 family. As to quaternary structure, heterotrimer of RPA1, RPA2 and RPA3 (canonical replication protein A complex).

The protein localises to the nucleus. Functionally, component of the replication protein A complex (RPA) required for DNA recombination, repair and replication. The activity of RPA is mediated by single-stranded DNA binding and protein interactions. Probably involved in repair of double-strand DNA breaks (DSBs) induced by genotoxic stresses. The polypeptide is Replication protein A 70 kDa DNA-binding subunit B (RPA1B) (Arabidopsis thaliana (Mouse-ear cress)).